The chain runs to 875 residues: Alanine--tRNA ligase (875 aa).

The Zn(2+) site is built by H564, H568, C666, and H670.

The protein belongs to the class-II aminoacyl-tRNA synthetase family. As to quaternary structure, homotetramer. Zn(2+) is required as a cofactor.

The protein resides in the cytoplasm. The catalysed reaction is tRNA(Ala) + L-alanine + ATP = L-alanyl-tRNA(Ala) + AMP + diphosphate. In terms of biological role, catalyzes the attachment of alanine to tRNA(Ala) in a two-step reaction: alanine is first activated by ATP to form Ala-AMP and then transferred to the acceptor end of tRNA(Ala). Also edits incorrectly charged Ser-tRNA(Ala) and Gly-tRNA(Ala) via its editing domain. The protein is Alanine--tRNA ligase of Yersinia pseudotuberculosis serotype O:1b (strain IP 31758).